The sequence spans 338 residues: Beta-ketoacyl-[acyl-carrier-protein] synthase III (338 aa).

Active-site residues include cysteine 119 and histidine 261. The segment at 262 to 266 is ACP-binding; it reads QANQR. Residue asparagine 291 is part of the active site.

The protein belongs to the thiolase-like superfamily. FabH family. In terms of assembly, homodimer.

It localises to the cytoplasm. The enzyme catalyses malonyl-[ACP] + acetyl-CoA + H(+) = 3-oxobutanoyl-[ACP] + CO2 + CoA. Its pathway is lipid metabolism; fatty acid biosynthesis. Catalyzes the condensation reaction of fatty acid synthesis by the addition to an acyl acceptor of two carbons from malonyl-ACP. Catalyzes the first condensation reaction which initiates fatty acid synthesis and may therefore play a role in governing the total rate of fatty acid production. Possesses both acetoacetyl-ACP synthase and acetyl transacylase activities. Its substrate specificity determines the biosynthesis of branched-chain and/or straight-chain of fatty acids. This Prochlorococcus marinus (strain SARG / CCMP1375 / SS120) protein is Beta-ketoacyl-[acyl-carrier-protein] synthase III.